A 174-amino-acid chain; its full sequence is Guided entry of tail-anchored proteins factor 1 (174 aa).

The Lumenal segment spans residues 1–8; the sequence is MSASETDR. Residues 9-29 traverse the membrane as a helical segment; it reads WAWLLVLSFVFGCNLLRILLP. Residues 30-99 lie on the Cytoplasmic side of the membrane; it reads SLSSFISRVL…VKARTAQLAK (70 aa). Positions 39–94 form a coiled coil; the sequence is LQKDAEQESQMRAEIQGMKQELSTVNMMDEFARYARLERKINKMTDKLKTHVKART. The interaction with GET3/TRC40 stretch occupies residues 39–97; it reads LQKDAEQESQMRAEIQGMKQELSTVNMMDEFARYARLERKINKMTDKLKTHVKARTAQL. Residues 100-120 traverse the membrane as a helical segment; it reads IKWFISVAFYILQAALMISLI. Residues 121 to 148 lie on the Lumenal side of the membrane; the sequence is WKYYSVPVAVVPSKWITPLDRLVAFPTR. A helical transmembrane segment spans residues 149–169; that stretch reads VAGGIGITCWILVCNKVVAIV. Topologically, residues 170 to 174 are cytoplasmic; that stretch reads LHPFS.

The protein belongs to the WRB/GET1 family. As to quaternary structure, component of the Golgi to ER traffic (GET) complex, which is composed of GET1, CAMLG/GET2 and GET3. Within the complex, GET1 and CAMLG form a heterotetramer which is stabilized by phosphatidylinositol binding and which binds to the GET3 homodimer. Interacts with CAMLG/GET2 (via C-terminus). GET3 shows a higher affinity for CAMLG than for GET1.

The protein resides in the endoplasmic reticulum membrane. Its function is as follows. Required for the post-translational delivery of tail-anchored (TA) proteins to the endoplasmic reticulum. Together with CAMLG/GET2, acts as a membrane receptor for soluble GET3/TRC40, which recognizes and selectively binds the transmembrane domain of TA proteins in the cytosol. Required to ensure correct topology and ER insertion of CAMLG. The polypeptide is Guided entry of tail-anchored proteins factor 1 (Mus musculus (Mouse)).